The chain runs to 270 residues: Aliphatic sulfonates import ATP-binding protein SsuB 2 (270 aa).

One can recognise an ABC transporter domain in the interval 17–241; that stretch reads LLDLRIARKL…PRDRRDPSLA (225 aa). 50 to 57 provides a ligand contact to ATP; sequence GPSGCGKS.

It belongs to the ABC transporter superfamily. Aliphatic sulfonates importer (TC 3.A.1.17.2) family. The complex is composed of two ATP-binding proteins (SsuB), two transmembrane proteins (SsuC) and a solute-binding protein (SsuA).

The protein localises to the cell inner membrane. It catalyses the reaction ATP + H2O + aliphatic sulfonate-[sulfonate-binding protein]Side 1 = ADP + phosphate + aliphatic sulfonateSide 2 + [sulfonate-binding protein]Side 1.. Its function is as follows. Part of the ABC transporter complex SsuABC involved in aliphatic sulfonates import. Responsible for energy coupling to the transport system. This is Aliphatic sulfonates import ATP-binding protein SsuB 2 from Burkholderia cenocepacia (strain HI2424).